We begin with the raw amino-acid sequence, 157 residues long: Endoribonuclease YbeY (157 aa).

The Zn(2+) site is built by histidine 114, histidine 118, and histidine 124.

It belongs to the endoribonuclease YbeY family. Zn(2+) is required as a cofactor.

The protein resides in the cytoplasm. Single strand-specific metallo-endoribonuclease involved in late-stage 70S ribosome quality control and in maturation of the 3' terminus of the 16S rRNA. In Yersinia pseudotuberculosis serotype O:1b (strain IP 31758), this protein is Endoribonuclease YbeY.